Consider the following 320-residue polypeptide: uncharacterized protein (320 aa).

Residues valine 196–lysine 273 form a disordered region. Residues tyrosine 200–asparagine 210 show a composition bias toward acidic residues. Residues serine 211–proline 226 show a composition bias toward basic and acidic residues. Polar residues predominate over residues glutamine 248–lysine 273.

This is an uncharacterized protein from Acanthamoeba polyphaga mimivirus (APMV).